A 665-amino-acid chain; its full sequence is Filensin (665 aa).

Residues 1-40 (MYRRSYVFQTRKEQYEHADEASRAAEPERPADEGWAGATS) form a head region. Phosphoserine is present on S5. An IF rod domain is found at 40-320 (SLAALQGLGE…RIIEIEGNRL (281 aa)). The interval 41–75 (LAALQGLGERVAAHVQRARALEQRHAGLRRQLDAF) is coil 1A. A42 is subject to N-acetylalanine. The linker 1 stretch occupies residues 76-84 (QRLGELAGP). The interval 85 to 184 (EDALARQVES…RHKKNLLEVQ (100 aa)) is coil 1B. Residues 185–201 (TYISILQQIIHTTPPAS) form a linker 12 region. Residues 202–320 (IVTSGMREEK…RIIEIEGNRL (119 aa)) form a coil 2 region. Residues 321–665 (TSAFIETPIP…DKKKSGEKSS (345 aa)) form a tail region. S341 and S420 each carry phosphoserine. 2 disordered regions span residues 410–439 (SKFE…QISK) and 506–614 (YDGQ…KGPP). Residue G434 is the site of N-myristoyl glycine attachment. Phosphoserine is present on S513. The span at 556–571 (PEEKREGEERDEESRR) shows a compositional bias: basic and acidic residues. At S665 the chain carries Phosphoserine.

It belongs to the intermediate filament family. As to quaternary structure, part of a complex required for lens intermediate filament formation composed of BFSP1, BFSP2 and CRYAA. Identified in a complex that contains VIM, EZR, AHNAK, BFSP1, BFSP2, ANK2, PLEC, PRX and spectrin. Found in a complex composed of PPL (via C-terminal linker domain), BFSP1 and BFSP2 in the retinal lens. Within the complex interacts with BFSP2. Interacts (via C-terminus) with MIP (via C-terminus) in aged lens fiber cells. Proteolytically cleaved during lens cell fiber differentiation with increased fragmentation as fiber cell age increases. Post-translationally, myristoylated at Gly-434 following proteolytic cleavage at Asp-433. In terms of processing, acetylated at Ala-42 following proteolytic cleavage at Leu-41. In terms of tissue distribution, expressed in the cortex and nucleus of the retina lens (at protein level).

It localises to the cell membrane. Its subcellular location is the cytoplasm. The protein resides in the cytoskeleton. The protein localises to the cell cortex. In terms of biological role, required for the correct formation of lens intermediate filaments as part of a complex composed of BFSP1, BFSP2 and CRYAA. Involved in altering the calcium regulation of MIP water permeability. In Homo sapiens (Human), this protein is Filensin (BFSP1).